A 448-amino-acid chain; its full sequence is Exodeoxyribonuclease 7 large subunit (448 aa).

The protein belongs to the XseA family. As to quaternary structure, heterooligomer composed of large and small subunits.

It localises to the cytoplasm. The catalysed reaction is Exonucleolytic cleavage in either 5'- to 3'- or 3'- to 5'-direction to yield nucleoside 5'-phosphates.. In terms of biological role, bidirectionally degrades single-stranded DNA into large acid-insoluble oligonucleotides, which are then degraded further into small acid-soluble oligonucleotides. The protein is Exodeoxyribonuclease 7 large subunit of Enterococcus faecalis (strain ATCC 700802 / V583).